Consider the following 117-residue polypeptide: uncharacterized protein (117 aa).

Positions 96-117 (RKGGASKHRTLSAETGIRGEGE) are disordered.

This is an uncharacterized protein from Saccharomyces cerevisiae (strain ATCC 204508 / S288c) (Baker's yeast).